A 97-amino-acid polypeptide reads, in one-letter code: UstYa family oxidase VicYc (97 aa).

Short sequence motifs (HXXHC) lie at residues 11-15 (HELHC) and 38-42 (HANHC).

This sequence belongs to the ustYa family.

It functions in the pathway mycotoxin biosynthesis. In terms of biological role, ustYa family oxidase, part of the gene cluster that mediates the biosynthesis of the secondary metabolite victorin, the molecular basis for Victoria blight of oats. The role of vicYc within the pathway has still to be determined. The pathway starts with the processing of the precursor vicA1 by several endopeptidases including kexin proteases as well as the cluster-specific S28 family peptidases vicPa and vicPb to produce 7 identical copies of the hexapeptide Gly-Leu-Lys-Leu-Ala-Phe. After being excised from the precursor peptide, the core peptides are cyclized and modified post-translationally by enzymes encoded within the gene cluster. The ustYa family oxidase vicYb is required for the formation of the macrocycle in victorin and the copper amine oxidases (CAOs) vicK1 and vicK2 are responsible for converting victorin to the active form by oxidizing the N-terminal glycyl residue in the peptides to glyoxylate. Relaxed substrate specificity of enzymes in the victorin biosynthetic pathway results in a metabolic grid that produces a set of analogs including victorinines B, C, E or HV-toxin M. This chain is UstYa family oxidase VicYc, found in Bipolaris victoriae (strain FI3) (Victoria blight of oats agent).